A 95-amino-acid chain; its full sequence is LSM complex subunit LSM2 (95 aa).

The Sm domain maps to 2–76; sequence LFFSFFKTLV…VRYVYLNKNM (75 aa).

The protein belongs to the snRNP Sm proteins family. Component of the heptameric LSM1-LSM7 complex that forms a seven-membered ring structure with a donut shape. The LSm subunits are arranged in the order LSM1, LSM2, LSM3, LSM6, LSM5, LSM7 and LSM4. Except for LSM1, where a C-terminal helix crosses the ring structure to form additional interactions with LSM3 and LSM6, each subunit interacts only with its two neighboring subunits. The LSM1-LSM7 complex interacts with PAT1; within the complex PAT1 has direct interactions with LSM2 and LSM3. The LSM1-LSM7 complex interacts with XRN1. Component of the heptameric LSM2-LSM8 complex that forms a seven-membered ring structure with a donut shape; an RNA strand can pass through the hole in the center of the ring structure. The LSm subunits are arranged in the order LSM8, LSM2, LSM3, LSM6, LSM5, LSM7 and LSM4. Interacts with U6 snRNA SNR6 and chaperone PRP24; to promote formation of the U4/U6-U5 tri-snRNP (small nuclear ribonucleoprotein) complex, the LSM2-LSM8 complex preferentially binds U6 snRNA that has been modified to contain a non-cyclic 3' phosphate. Component of the spliceosome U4/U6-U5 tri-snRNP complex composed of the U4, U6 and U5 snRNAs and at least PRP3, PRP4, PRP6, PRP8, PRP18, PRP31, PRP38, SNU13, SNU23, SNU66, SNU114, SPP381, SMB1, SMD1, SMD2, SMD3, SMX2, SMX3, LSM2, LSM3, LSM4, LSM5, LSM6, LSM7, LSM8, BRR2 and DIB1. May be found in a complex comprising LSM2-LSM7 without LSM1 or LSM8; the complex associates with pre-P RNA and snoRNA SNR5.

The protein resides in the nucleus. Its subcellular location is the nucleolus. It is found in the cytoplasm. In terms of biological role, component of LSm protein complexes, which are involved in RNA processing and may function in a chaperone-like manner. Component of the cytoplasmic LSM1-LSM7 complex which is involved in mRNA degradation by activating the decapping step. Together with PAT1, the LSM1-LSM7 complex binds to osmotic stress-activated mRNAs to attenuate the osmotic stress response, probably by limiting ribosome access to the mRNA and consequently translation. Component of the nuclear LSM2-LSM8 complex, which is involved in spliceosome assembly. The LSM2-LSM8 complex plays a role in the biogenesis of the spliceosomal U4/U6-U5 tri-snRNP complex by accelerating PRP24-mediated annealing of U4/U6 di-snRNA. The LSM2-LSM8 complex binds U6 snRNA terminating with a non-cyclic 3' phosphate group. LSM2-LSM8 is probably also involved in degradation of nuclear pre-mRNA by targeting them for decapping. LSM2-LSM8 could be involved in processing of pre-tRNAs, pre-rRNAs and U3 snoRNA, although involvement may be indirect. In a complex that probably contains LSM2-LSM7, but not LSM1 or LSM8, associates with the precursor of the RNA component of RNase P (pre-P RNA) and may be involved in maturing pre-P RNA; the complex also associates with snoRNA SNR5. This is LSM complex subunit LSM2 (LSM2) from Saccharomyces cerevisiae (strain ATCC 204508 / S288c) (Baker's yeast).